The sequence spans 42 residues: Large ribosomal subunit protein bL34c (42 aa).

Belongs to the bacterial ribosomal protein bL34 family.

The protein localises to the plastid. It is found in the chloroplast. In Olisthodiscus luteus (Marine phytoflagellate), this protein is Large ribosomal subunit protein bL34c (rpl34).